Here is a 160-residue protein sequence, read N- to C-terminus: MTFVTCDLCDDNADSVCVVTGLNWLSYGGRDAFGGEIVTVKCFEDNSRVKEHLGTDGKGKVLVVDGGGSLRNALIGDMIAENAVKNGWEGVIIYGACRDVDALAKLDIGVITLGCVPIKSVRRDEGQLNIEITFGGVVFRPGEFVYADNNGIITAPKALV.

Substrate is bound by residues 76 to 79 and Arg-98; that span reads GDMI. An a divalent metal cation-binding site is contributed by Asp-99.

The protein belongs to the class II aldolase/RraA-like family. As to quaternary structure, homotrimer. A divalent metal cation serves as cofactor.

It catalyses the reaction 4-hydroxy-4-methyl-2-oxoglutarate = 2 pyruvate. The enzyme catalyses oxaloacetate + H(+) = pyruvate + CO2. In terms of biological role, catalyzes the aldol cleavage of 4-hydroxy-4-methyl-2-oxoglutarate (HMG) into 2 molecules of pyruvate. Also contains a secondary oxaloacetate (OAA) decarboxylase activity due to the common pyruvate enolate transition state formed following C-C bond cleavage in the retro-aldol and decarboxylation reactions. The sequence is that of Putative 4-hydroxy-4-methyl-2-oxoglutarate aldolase from Alcanivorax borkumensis (strain ATCC 700651 / DSM 11573 / NCIMB 13689 / SK2).